Here is a 184-residue protein sequence, read N- to C-terminus: Ribosome maturation factor RimM (184 aa).

One can recognise a PRC barrel domain in the interval 106–184 (PGDYYWYQLE…RMIVDWDPEF (79 aa)).

This sequence belongs to the RimM family. Binds ribosomal protein uS19.

The protein localises to the cytoplasm. In terms of biological role, an accessory protein needed during the final step in the assembly of 30S ribosomal subunit, possibly for assembly of the head region. Essential for efficient processing of 16S rRNA. May be needed both before and after RbfA during the maturation of 16S rRNA. It has affinity for free ribosomal 30S subunits but not for 70S ribosomes. In Chromohalobacter salexigens (strain ATCC BAA-138 / DSM 3043 / CIP 106854 / NCIMB 13768 / 1H11), this protein is Ribosome maturation factor RimM.